Here is a 573-residue protein sequence, read N- to C-terminus: 2-succinyl-5-enolpyruvyl-6-hydroxy-3-cyclohexene-1-carboxylate synthase (573 aa).

This sequence belongs to the TPP enzyme family. MenD subfamily. Homodimer. Requires Mg(2+) as cofactor. The cofactor is Mn(2+). Thiamine diphosphate serves as cofactor.

The catalysed reaction is isochorismate + 2-oxoglutarate + H(+) = 5-enolpyruvoyl-6-hydroxy-2-succinyl-cyclohex-3-ene-1-carboxylate + CO2. It participates in quinol/quinone metabolism; 1,4-dihydroxy-2-naphthoate biosynthesis; 1,4-dihydroxy-2-naphthoate from chorismate: step 2/7. It functions in the pathway quinol/quinone metabolism; menaquinone biosynthesis. Its function is as follows. Catalyzes the thiamine diphosphate-dependent decarboxylation of 2-oxoglutarate and the subsequent addition of the resulting succinic semialdehyde-thiamine pyrophosphate anion to isochorismate to yield 2-succinyl-5-enolpyruvyl-6-hydroxy-3-cyclohexene-1-carboxylate (SEPHCHC). This Shewanella sp. (strain MR-4) protein is 2-succinyl-5-enolpyruvyl-6-hydroxy-3-cyclohexene-1-carboxylate synthase.